The chain runs to 221 residues: UPF0502 protein Sputw3181_2381 (221 aa).

This sequence belongs to the UPF0502 family.

The protein is UPF0502 protein Sputw3181_2381 of Shewanella sp. (strain W3-18-1).